A 132-amino-acid polypeptide reads, in one-letter code: MAAGRVKRTTRRKKERKNVEHGCAHIRSTFNNSIVTITDAAGNTLSWASAGGLGFRGSRKSTPFAAQMAAETSAKAAMEHGLKSIEVYVKGPGSGREAAIRSLQAAGLEVTLIKDVTPIPHNGCRPPKRRRV.

This sequence belongs to the universal ribosomal protein uS11 family. Part of the 30S ribosomal subunit. Interacts with proteins S7 and S18. Binds to IF-3.

Its function is as follows. Located on the platform of the 30S subunit, it bridges several disparate RNA helices of the 16S rRNA. Forms part of the Shine-Dalgarno cleft in the 70S ribosome. This chain is Small ribosomal subunit protein uS11, found in Clostridium kluyveri (strain NBRC 12016).